The following is a 382-amino-acid chain: Lipid-A-disaccharide synthase (382 aa).

It belongs to the LpxB family.

The catalysed reaction is 2-N,3-O-bis[(3R)-3-hydroxytetradecanoyl]-alpha-D-glucosaminyl 1-phosphate + UDP-2-N,3-O-bis[(3R)-3-hydroxytetradecanoyl]-alpha-D-glucosamine = lipid A disaccharide (E. coli) + UDP + H(+). It catalyses the reaction a lipid X + a UDP-2-N,3-O-bis[(3R)-3-hydroxyacyl]-alpha-D-glucosamine = a lipid A disaccharide + UDP + H(+). It functions in the pathway glycolipid biosynthesis; lipid IV(A) biosynthesis; lipid IV(A) from (3R)-3-hydroxytetradecanoyl-[acyl-carrier-protein] and UDP-N-acetyl-alpha-D-glucosamine: step 5/6. Its function is as follows. Condensation of UDP-2,3-diacylglucosamine and 2,3-diacylglucosamine-1-phosphate to form lipid A disaccharide, a precursor of lipid A, a phosphorylated glycolipid that anchors the lipopolysaccharide to the outer membrane of the cell. The chain is Lipid-A-disaccharide synthase from Salmonella typhimurium (strain LT2 / SGSC1412 / ATCC 700720).